The sequence spans 318 residues: DNA-directed RNA polymerase subunit alpha (318 aa).

The interval 1–227 (MTQFEIECLD…NLFSPLKTID (227 aa)) is alpha N-terminal domain (alpha-NTD). Residues 241–318 (HINQILIEEL…KEKTTKIYNK (78 aa)) are alpha C-terminal domain (alpha-CTD).

This sequence belongs to the RNA polymerase alpha chain family. In plastids the minimal PEP RNA polymerase catalytic core is composed of four subunits: alpha, beta, beta', and beta''. When a (nuclear-encoded) sigma factor is associated with the core the holoenzyme is formed, which can initiate transcription.

Its subcellular location is the plastid. It localises to the chloroplast. The catalysed reaction is RNA(n) + a ribonucleoside 5'-triphosphate = RNA(n+1) + diphosphate. Its function is as follows. DNA-dependent RNA polymerase catalyzes the transcription of DNA into RNA using the four ribonucleoside triphosphates as substrates. The chain is DNA-directed RNA polymerase subunit alpha from Guillardia theta (Cryptophyte).